A 214-amino-acid polypeptide reads, in one-letter code: Holliday junction branch migration complex subunit RuvA (214 aa).

The segment at 1–63 is domain I; sequence MISFLRGTVA…EDSLTLFGFS (63 aa). A domain II region spans residues 64–142; the sequence is SDDEREVFDV…PHGTGAAAAP (79 aa). The interval 143-153 is flexible linker; the sequence is AAAASAPWKPQ. The domain III stretch occupies residues 153 to 214; that stretch reads QVVAAMTSLG…RAGNRVGSRG (62 aa).

The protein belongs to the RuvA family. Homotetramer. Forms an RuvA(8)-RuvB(12)-Holliday junction (HJ) complex. HJ DNA is sandwiched between 2 RuvA tetramers; dsDNA enters through RuvA and exits via RuvB. An RuvB hexamer assembles on each DNA strand where it exits the tetramer. Each RuvB hexamer is contacted by two RuvA subunits (via domain III) on 2 adjacent RuvB subunits; this complex drives branch migration. In the full resolvosome a probable DNA-RuvA(4)-RuvB(12)-RuvC(2) complex forms which resolves the HJ.

The protein resides in the cytoplasm. Its function is as follows. The RuvA-RuvB-RuvC complex processes Holliday junction (HJ) DNA during genetic recombination and DNA repair, while the RuvA-RuvB complex plays an important role in the rescue of blocked DNA replication forks via replication fork reversal (RFR). RuvA specifically binds to HJ cruciform DNA, conferring on it an open structure. The RuvB hexamer acts as an ATP-dependent pump, pulling dsDNA into and through the RuvAB complex. HJ branch migration allows RuvC to scan DNA until it finds its consensus sequence, where it cleaves and resolves the cruciform DNA. This chain is Holliday junction branch migration complex subunit RuvA, found in Arthrobacter sp. (strain FB24).